Reading from the N-terminus, the 149-residue chain is D-aminoacyl-tRNA deacylase (149 aa).

A Gly-cisPro motif, important for rejection of L-amino acids motif is present at residues 138–139 (GP).

The protein belongs to the DTD family. In terms of assembly, homodimer.

The protein resides in the cytoplasm. It catalyses the reaction glycyl-tRNA(Ala) + H2O = tRNA(Ala) + glycine + H(+). The enzyme catalyses a D-aminoacyl-tRNA + H2O = a tRNA + a D-alpha-amino acid + H(+). In terms of biological role, an aminoacyl-tRNA editing enzyme that deacylates mischarged D-aminoacyl-tRNAs. Also deacylates mischarged glycyl-tRNA(Ala), protecting cells against glycine mischarging by AlaRS. Acts via tRNA-based rather than protein-based catalysis; rejects L-amino acids rather than detecting D-amino acids in the active site. By recycling D-aminoacyl-tRNA to D-amino acids and free tRNA molecules, this enzyme counteracts the toxicity associated with the formation of D-aminoacyl-tRNA entities in vivo and helps enforce protein L-homochirality. The chain is D-aminoacyl-tRNA deacylase from Chlorobaculum parvum (strain DSM 263 / NCIMB 8327) (Chlorobium vibrioforme subsp. thiosulfatophilum).